Here is a 340-residue protein sequence, read N- to C-terminus: Phosphoribosylformylglycinamidine cyclo-ligase (340 aa).

This sequence belongs to the AIR synthase family.

It is found in the cytoplasm. It catalyses the reaction 2-formamido-N(1)-(5-O-phospho-beta-D-ribosyl)acetamidine + ATP = 5-amino-1-(5-phospho-beta-D-ribosyl)imidazole + ADP + phosphate + H(+). The protein operates within purine metabolism; IMP biosynthesis via de novo pathway; 5-amino-1-(5-phospho-D-ribosyl)imidazole from N(2)-formyl-N(1)-(5-phospho-D-ribosyl)glycinamide: step 2/2. This chain is Phosphoribosylformylglycinamidine cyclo-ligase, found in Streptococcus gordonii (strain Challis / ATCC 35105 / BCRC 15272 / CH1 / DL1 / V288).